The sequence spans 973 residues: E3 ubiquitin-protein ligase BRE1A (973 aa).

The segment at 1–37 (MSGIGNKRAAGEPGTSMPPEKKTAVEDSGTTVETIKL) is disordered. Position 21 is an N6-acetyllysine (K21). S41 is modified (phosphoserine). Residues 43–90 (TEELDIRTLQSKNRKLAEMLDQRQAIEDELREHIEKLERRQATDDASL) adopt a coiled-coil conformation. A disordered region spans residues 128 to 153 (VVPEPEPDSDSNQERKDDRERGDGQE). Phosphoserine is present on residues S136 and S138. Residues 139–151 (NQERKDDRERGDG) show a composition bias toward basic and acidic residues. 2 coiled-coil regions span residues 168–378 (EEME…VKET) and 429–896 (SLHK…TTKK). N6-acetyllysine is present on residues K348 and K510. The tract at residues 507 to 620 (DLNKTRLRSG…GKHDDGRKKE (114 aa)) is disordered. The residue at position 522 (S522) is a Phosphoserine. Basic and acidic residues-rich tracts occupy residues 527–544 (EDPKDEPTELKQDSEDLA) and 553–620 (SQED…RKKE). At S560 the chain carries Phosphoserine. The RING-type zinc finger occupies 920 to 959 (CPCCNMRKKDAVLTKCFHVFCFECVKTRYDTRQRKCPKCN).

This sequence belongs to the BRE1 family. In terms of assembly, component of the RNF20/40 complex (also known as BRE1 complex) probably composed of 2 copies of RNF20/BRE1A and 2 copies of RNF40/BRE1B. Interacts with UBE2E1/UBCH6. Interacts with p53/TP53 and WAC. Interacts with PAF1; the interaction mediates the association of the PAF1 and RNF20/40 complexes which is a prerequsite for recruitment of UBE2A/B. Interacts with PA2G4. Interacts with FBXL19.

It localises to the nucleus. The catalysed reaction is S-ubiquitinyl-[E2 ubiquitin-conjugating enzyme]-L-cysteine + [acceptor protein]-L-lysine = [E2 ubiquitin-conjugating enzyme]-L-cysteine + N(6)-ubiquitinyl-[acceptor protein]-L-lysine.. The protein operates within protein modification; protein ubiquitination. Functionally, component of the RNF20/40 E3 ubiquitin-protein ligase complex that mediates monoubiquitination of 'Lys-120' of histone H2B (H2BK120ub1). H2BK120ub1 gives a specific tag for epigenetic transcriptional activation and is also prerequisite for histone H3 'Lys-4' and 'Lys-79' methylation (H3K4me and H3K79me, respectively). It thereby plays a central role in histone code and gene regulation. The RNF20/40 complex forms a H2B ubiquitin ligase complex in cooperation with the E2 enzyme UBE2A or UBE2B; reports about the cooperation with UBE2E1/UBCH are contradictory. Required for transcriptional activation of Hox genes. Recruited to the MDM2 promoter, probably by being recruited by p53/TP53, and thereby acts as a transcriptional coactivator. Mediates the polyubiquitination of PA2G4 leading to its proteasome-mediated degradation. The protein is E3 ubiquitin-protein ligase BRE1A (Rnf20) of Mus musculus (Mouse).